The sequence spans 437 residues: Trigger factor (437 aa).

Residues 161 to 246 (GDRVNIDFKG…VNKVEGKALP (86 aa)) form the PPIase FKBP-type domain.

The protein belongs to the FKBP-type PPIase family. Tig subfamily.

The protein localises to the cytoplasm. It catalyses the reaction [protein]-peptidylproline (omega=180) = [protein]-peptidylproline (omega=0). Its function is as follows. Involved in protein export. Acts as a chaperone by maintaining the newly synthesized protein in an open conformation. Functions as a peptidyl-prolyl cis-trans isomerase. The sequence is that of Trigger factor from Alcanivorax borkumensis (strain ATCC 700651 / DSM 11573 / NCIMB 13689 / SK2).